The chain runs to 364 residues: Histidinol-phosphate aminotransferase (364 aa).

Lysine 220 is modified (N6-(pyridoxal phosphate)lysine).

The protein belongs to the class-II pyridoxal-phosphate-dependent aminotransferase family. Histidinol-phosphate aminotransferase subfamily. In terms of assembly, homodimer. Pyridoxal 5'-phosphate is required as a cofactor.

The enzyme catalyses L-histidinol phosphate + 2-oxoglutarate = 3-(imidazol-4-yl)-2-oxopropyl phosphate + L-glutamate. It participates in amino-acid biosynthesis; L-histidine biosynthesis; L-histidine from 5-phospho-alpha-D-ribose 1-diphosphate: step 7/9. This is Histidinol-phosphate aminotransferase from Stenotrophomonas maltophilia (strain R551-3).